The following is a 485-amino-acid chain: Probable serine/threonine-protein kinase nek1 (485 aa).

A Protein kinase domain is found at 12-283 (YLIKSQIGSG…TQQILEQVFI (272 aa)). ATP-binding positions include 18 to 26 (IGSGSYGNT) and K41. Residue D136 is the Proton acceptor of the active site. Polar residues predominate over residues 354-365 (KNQQQQSPQKLE). Residues 354-419 (KNQQQQSPQK…NNDKNNNINN (66 aa)) form a disordered region. Low complexity predominate over residues 366–419 (NNNNNNNDNNNNNNNNNNNNNNNNNNNNNNNNNNNNNNNNNNNNNNDKNNNINN).

The protein belongs to the protein kinase superfamily. NEK Ser/Thr protein kinase family. NIMA subfamily.

It carries out the reaction L-seryl-[protein] + ATP = O-phospho-L-seryl-[protein] + ADP + H(+). The catalysed reaction is L-threonyl-[protein] + ATP = O-phospho-L-threonyl-[protein] + ADP + H(+). This chain is Probable serine/threonine-protein kinase nek1 (nek1), found in Dictyostelium discoideum (Social amoeba).